A 232-amino-acid polypeptide reads, in one-letter code: Large ribosomal subunit protein uL1 (232 aa).

This sequence belongs to the universal ribosomal protein uL1 family. In terms of assembly, part of the 50S ribosomal subunit.

Binds directly to 23S rRNA. The L1 stalk is quite mobile in the ribosome, and is involved in E site tRNA release. In terms of biological role, protein L1 is also a translational repressor protein, it controls the translation of the L11 operon by binding to its mRNA. This chain is Large ribosomal subunit protein uL1, found in Methylobacterium radiotolerans (strain ATCC 27329 / DSM 1819 / JCM 2831 / NBRC 15690 / NCIMB 10815 / 0-1).